Reading from the N-terminus, the 336-residue chain is tRNA N6-adenosine threonylcarbamoyltransferase (336 aa).

Positions 112 and 116 each coordinate Fe cation. Residues Leu136 to Gly140, Asp169, Gly182, and Asn276 each bind substrate. Asp304 is a binding site for Fe cation.

It belongs to the KAE1 / TsaD family. The cofactor is Fe(2+).

The protein resides in the cytoplasm. It catalyses the reaction L-threonylcarbamoyladenylate + adenosine(37) in tRNA = N(6)-L-threonylcarbamoyladenosine(37) in tRNA + AMP + H(+). Its function is as follows. Required for the formation of a threonylcarbamoyl group on adenosine at position 37 (t(6)A37) in tRNAs that read codons beginning with adenine. Is involved in the transfer of the threonylcarbamoyl moiety of threonylcarbamoyl-AMP (TC-AMP) to the N6 group of A37, together with TsaE and TsaB. TsaD likely plays a direct catalytic role in this reaction. The protein is tRNA N6-adenosine threonylcarbamoyltransferase of Francisella tularensis subsp. holarctica (strain FTNF002-00 / FTA).